The following is a 236-amino-acid chain: Glucosamine-6-phosphate deaminase (236 aa).

The Proton acceptor; for enolization step role is filled by Asp62. Catalysis depends on Asn128, which acts as the For ring-opening step. The active-site Proton acceptor; for ring-opening step is His130. Glu135 functions as the For ring-opening step in the catalytic mechanism.

Belongs to the glucosamine/galactosamine-6-phosphate isomerase family. NagB subfamily.

It catalyses the reaction alpha-D-glucosamine 6-phosphate + H2O = beta-D-fructose 6-phosphate + NH4(+). It functions in the pathway amino-sugar metabolism; N-acetylneuraminate degradation; D-fructose 6-phosphate from N-acetylneuraminate: step 5/5. Functionally, catalyzes the reversible isomerization-deamination of glucosamine 6-phosphate (GlcN6P) to form fructose 6-phosphate (Fru6P) and ammonium ion. The chain is Glucosamine-6-phosphate deaminase from Pediococcus pentosaceus (strain ATCC 25745 / CCUG 21536 / LMG 10740 / 183-1w).